The primary structure comprises 116 residues: MSGQMFKVEIVTRPANFEKLKQELGKIGVTSLTFSNVHGCGLQKAHTELYRGVKIESNVYERLKIEIVVSKVPVDQVTETAKRVLKTGSPGDGKIFVYEISNTINIRTGEEGPEAL.

It belongs to the P(II) protein family. In terms of assembly, needs to interact with NrgA in order to localize correctly to the membrane.

It is found in the cell membrane. Required for full induction of the nrgAB operon under conditions of ammonium limitation. This Bacillus subtilis (strain 168) protein is Nitrogen regulatory PII-like protein (nrgB).